Here is a 95-residue protein sequence, read N- to C-terminus: uncharacterized protein (95 aa).

This is an uncharacterized protein from Enterobacteria phage T4 (Bacteriophage T4).